The sequence spans 317 residues: Ribosomal RNA large subunit methyltransferase F (317 aa).

It belongs to the methyltransferase superfamily. METTL16/RlmF family.

The protein resides in the cytoplasm. It catalyses the reaction adenosine(1618) in 23S rRNA + S-adenosyl-L-methionine = N(6)-methyladenosine(1618) in 23S rRNA + S-adenosyl-L-homocysteine + H(+). Functionally, specifically methylates the adenine in position 1618 of 23S rRNA. In Pseudomonas putida (strain ATCC 700007 / DSM 6899 / JCM 31910 / BCRC 17059 / LMG 24140 / F1), this protein is Ribosomal RNA large subunit methyltransferase F.